The following is a 204-amino-acid chain: Elongation factor Ts (204 aa).

The interval 80–83 is involved in Mg(2+) ion dislocation from EF-Tu; it reads TDFV.

The protein belongs to the EF-Ts family.

It localises to the cytoplasm. Its function is as follows. Associates with the EF-Tu.GDP complex and induces the exchange of GDP to GTP. It remains bound to the aminoacyl-tRNA.EF-Tu.GTP complex up to the GTP hydrolysis stage on the ribosome. The sequence is that of Elongation factor Ts from Thermoanaerobacter sp. (strain X514).